A 397-amino-acid chain; its full sequence is Probable pyruvate dehydrogenase E1 component subunit alpha, mitochondrial (397 aa).

Residues His-86, Tyr-112, Arg-113, Gly-159, Val-161, Asp-190, Gly-191, Ala-192, and Asn-219 each contribute to the pyruvate site. 9 residues coordinate thiamine diphosphate: Tyr-112, Arg-113, Gly-159, Val-161, Asp-190, Gly-191, Ala-192, Asn-219, and His-286. Mg(2+) is bound at residue Asp-190. Asn-219 lines the Mg(2+) pocket.

Tetramer of 2 alpha and 2 beta subunits. The cofactor is thiamine diphosphate. Mg(2+) serves as cofactor.

The protein resides in the mitochondrion matrix. It catalyses the reaction N(6)-[(R)-lipoyl]-L-lysyl-[protein] + pyruvate + H(+) = N(6)-[(R)-S(8)-acetyldihydrolipoyl]-L-lysyl-[protein] + CO2. Its activity is regulated as follows. E1 activity is regulated by phosphorylation (inactivation) and dephosphorylation (activation) of the alpha subunit. In terms of biological role, the pyruvate dehydrogenase complex catalyzes the overall conversion of pyruvate to acetyl-CoA and CO(2). It contains multiple copies of three enzymatic components: pyruvate dehydrogenase (E1), dihydrolipoamide acetyltransferase (E2) and lipoamide dehydrogenase (E3). This Caenorhabditis elegans protein is Probable pyruvate dehydrogenase E1 component subunit alpha, mitochondrial.